Here is a 242-residue protein sequence, read N- to C-terminus: 1-(5-phosphoribosyl)-5-[(5-phosphoribosylamino)methylideneamino] imidazole-4-carboxamide isomerase (242 aa).

Asp10 (proton acceptor) is an active-site residue. Asp132 (proton donor) is an active-site residue.

The protein belongs to the HisA/HisF family.

It is found in the cytoplasm. It catalyses the reaction 1-(5-phospho-beta-D-ribosyl)-5-[(5-phospho-beta-D-ribosylamino)methylideneamino]imidazole-4-carboxamide = 5-[(5-phospho-1-deoxy-D-ribulos-1-ylimino)methylamino]-1-(5-phospho-beta-D-ribosyl)imidazole-4-carboxamide. The protein operates within amino-acid biosynthesis; L-histidine biosynthesis; L-histidine from 5-phospho-alpha-D-ribose 1-diphosphate: step 4/9. The polypeptide is 1-(5-phosphoribosyl)-5-[(5-phosphoribosylamino)methylideneamino] imidazole-4-carboxamide isomerase (Methanothrix thermoacetophila (strain DSM 6194 / JCM 14653 / NBRC 101360 / PT) (Methanosaeta thermophila)).